The primary structure comprises 573 residues: Arylsulfatase I (573 aa).

Residues 1–23 (MHALTGLSLVSLLSFGYLSWDWA) form the signal peptide. 3 residues coordinate Ca(2+): Asp-56, Asp-57, and Cys-94. Cys-94 (nucleophile) is an active-site residue. Cys-94 carries the 3-oxoalanine (Cys) modification. Substrate is bound at residue Lys-148. Residue His-150 is part of the active site. A substrate-binding site is contributed by His-240. Residues Asn-277 and Asn-289 are each glycosylated (N-linked (GlcNAc...) asparagine). Ca(2+)-binding residues include Asp-298 and Asn-299. Residue Lys-316 coordinates substrate. 2 N-linked (GlcNAc...) asparagine glycosylation sites follow: Asn-467 and Asn-497. A disordered region spans residues 516–550 (FNGGAWGPWASDEEEEEEEEEAGRARSFSRGRRKK). Over residues 526–536 (SDEEEEEEEEE) the composition is skewed to acidic residues.

It belongs to the sulfatase family. Requires Ca(2+) as cofactor. The oxidation of Cys-94 residue to 3-oxoalanine (also known as C(alpha)-formylglycine) by SUMF1/Sulfatase-modifying factor 1, seems critical for catalytic activity.

The protein localises to the secreted. It localises to the endoplasmic reticulum. Displays arylsulfatase activity at neutral pH, when co-expressed with SUMF1; arylsulfatase activity is measured in the secretion medium of retinal cell line, but no activity is recorded when measured in cell extracts. The protein is Arylsulfatase I (ARSI) of Canis lupus familiaris (Dog).